Reading from the N-terminus, the 99-residue chain is Large ribosomal subunit protein uL23 (99 aa).

It belongs to the universal ribosomal protein uL23 family. As to quaternary structure, part of the 50S ribosomal subunit. Contacts protein L29, and trigger factor when it is bound to the ribosome.

Functionally, one of the early assembly proteins it binds 23S rRNA. One of the proteins that surrounds the polypeptide exit tunnel on the outside of the ribosome. Forms the main docking site for trigger factor binding to the ribosome. The protein is Large ribosomal subunit protein uL23 of Azotobacter vinelandii (strain DJ / ATCC BAA-1303).